Reading from the N-terminus, the 396-residue chain is Diphosphomevalonate decarboxylase (396 aa).

(R)-5-diphosphomevalonate contacts are provided by residues 19 to 22, Arg-74, 153 to 158, and Thr-209; these read YWGK and SGSACR.

Belongs to the diphosphomevalonate decarboxylase family. As to quaternary structure, homodimer.

It carries out the reaction (R)-5-diphosphomevalonate + ATP = isopentenyl diphosphate + ADP + phosphate + CO2. Its pathway is isoprenoid biosynthesis; isopentenyl diphosphate biosynthesis via mevalonate pathway; isopentenyl diphosphate from (R)-mevalonate: step 3/3. Its function is as follows. Diphosphomevalonate decarboxylase; part of the second module of ergosterol biosynthesis pathway that includes the middle steps of the pathway. MVD1/ERG19 converts diphosphomevalonate into isopentenyl diphosphate. The second module is carried out in the vacuole and involves the formation of farnesyl diphosphate, which is also an important intermediate in the biosynthesis of ubiquinone, dolichol, heme and prenylated proteins. Activity by the mevalonate kinase ERG12 first converts mevalonate into 5-phosphomevalonate. 5-phosphomevalonate is then further converted to 5-diphosphomevalonate by the phosphomevalonate kinase ERG8. The diphosphomevalonate decarboxylase MVD1/ERG19 then produces isopentenyl diphosphate. The isopentenyl-diphosphate delta-isomerase IDI1 then catalyzes the 1,3-allylic rearrangement of the homoallylic substrate isopentenyl (IPP) to its highly electrophilic allylic isomer, dimethylallyl diphosphate (DMAPP). Finally the farnesyl diphosphate synthase ERG20 catalyzes the sequential condensation of isopentenyl pyrophosphate with dimethylallyl pyrophosphate, and then with the resultant geranylpyrophosphate to the ultimate product farnesyl pyrophosphate. The chain is Diphosphomevalonate decarboxylase from Saccharomyces cerevisiae (strain ATCC 204508 / S288c) (Baker's yeast).